A 184-amino-acid chain; its full sequence is Large ribosomal subunit protein uL15 (184 aa).

The segment at 1-45 (MNLSSLRPAKGSVRNKKRVGRGQGSGNGTTAGKGNKGQQARSGYK) is disordered. Over residues 21–35 (RGQGSGNGTTAGKGN) the composition is skewed to gly residues.

This sequence belongs to the universal ribosomal protein uL15 family. As to quaternary structure, part of the 50S ribosomal subunit.

In terms of biological role, binds to the 23S rRNA. The protein is Large ribosomal subunit protein uL15 of Chlorobium chlorochromatii (strain CaD3).